The chain runs to 101 residues: Small ribosomal subunit protein uS14 (101 aa).

Belongs to the universal ribosomal protein uS14 family. Part of the 30S ribosomal subunit. Contacts proteins S3 and S10.

In terms of biological role, binds 16S rRNA, required for the assembly of 30S particles and may also be responsible for determining the conformation of the 16S rRNA at the A site. The sequence is that of Small ribosomal subunit protein uS14 from Brucella anthropi (strain ATCC 49188 / DSM 6882 / CCUG 24695 / JCM 21032 / LMG 3331 / NBRC 15819 / NCTC 12168 / Alc 37) (Ochrobactrum anthropi).